Consider the following 348-residue polypeptide: Farnesoic acid carboxyl-O-methyltransferase (348 aa).

Y16 provides a ligand contact to S-adenosyl-L-methionine. Residues Y16 and 19-23 (HSKYQ) each bind substrate. S-adenosyl-L-methionine is bound by residues G57, 57 to 58 (GC), N63, 94 to 97 (FNDS), 123 to 125 (SFF), and 140 to 142 (SYS). 141-145 (YSLHF) serves as a coordination point for substrate. Positions 162, 247, and 249 each coordinate Mg(2+).

Belongs to the methyltransferase superfamily. SABATH family. As to quaternary structure, homodimer. Requires Mg(2+) as cofactor. In terms of tissue distribution, mostly expressed in leaves and, at very low levels, in roots, stems, flowers and siliques.

It carries out the reaction (2E,6E)-farnesoate + S-adenosyl-L-methionine = methyl (2E,6E)-farnesoate + S-adenosyl-L-homocysteine. The enzyme catalyses juvenile hormone III carboxylate + S-adenosyl-L-methionine = juvenile hormone III + S-adenosyl-L-homocysteine. It functions in the pathway sesquiterpene biosynthesis. Its activity is regulated as follows. Activated by Mn(2+) ions. Strongly inhibited by Cu(2+), Zn(2+), Fe(3+) and Fe(2+) ions. Moderately inhibited by Na(+) and Ca(2+) ions. Rapidly degraded at temperatures above 40 degrees Celsius. Functionally, may catalyze the production of the insect juvenile hormone methyl farnesoate (MeFA) to trigger defense against insect herbivory. The protein is Farnesoic acid carboxyl-O-methyltransferase of Arabidopsis thaliana (Mouse-ear cress).